Here is a 364-residue protein sequence, read N- to C-terminus: MAGTVTVPGSSTPSTPLLKDELDIVIPTIRNLDFLEMWRAFFQPYHLIIVQDGDPTKTIKVPEGFDYELYNRNDINRILGPKASCISFKDSACRCFGYMVSKKKYIYTIDDDCFVAKDPSGKDINALEQHIKNLLSPSTPFFFNTLYDPYREGADFVRGYPFSLREGAHTAVSHGLWLNIPDYDAPTQLVKPKERNERYVDAVMTIPKGTLFPMCGMNLAFDRDLIGPAMYFGLMGDGQPIGRYDDMWAGWCVKVICDHLSLGVKTGLPYIWHSKASNPFVNLKKEYKGIFWQEDIIPFFQNVTIPKDCDTVQKCYIYLSGQVKEKLGTIDPYFVKLGDAMVTWIEAWDELNPSTPAAANGKAK.

Residues 110-112 (DDD) carry the DXD motif motif. An N-linked (Glc...) arginine glycan is attached at Arg158.

This sequence belongs to the RGP family. In terms of assembly, homopentamer or homohexamer. Mn(2+) serves as cofactor. Requires Mg(2+) as cofactor. In terms of processing, reversibly glycosylated by UDP-glucose, UDP-xylose and UDP-galactose.

The protein resides in the secreted. Its subcellular location is the cell wall. It localises to the cell junction. The protein localises to the plasmodesma. It is found in the golgi apparatus. It carries out the reaction UDP-beta-L-arabinofuranose = UDP-beta-L-arabinopyranose. Its function is as follows. Probable UDP-L-arabinose mutase involved in the biosynthesis of cell wall non-cellulosic polysaccharides. Was initially shown to possess an autoglycosylating activity which is dependent on the presence of UDP-glucose and manganese. The protein is Probable UDP-arabinopyranose mutase 1 of Zea mays (Maize).